Reading from the N-terminus, the 515-residue chain is MATTLNPSEISELIKTRIEQVKLSAESRNEGTVTSVSDGIVRIFGLADAMQGEMIELPNKTYALALNLERDSVGAVILGDYKHLREGDVAKTTGRILEVPVGKSLLGRVVNALGEPIDGKGTLGPTQTAPVERVAPGVIWRKSVDQPVQTGYKSVDAMIPIGRGQRELIIGDRQTGKTAMAIDTVISQKDTGIKCVYVAIGQKASTIANIVRKLEENDALDHTIVVAATASESAALQYISAYAGCTMGEYFMDRGEDALIIYDDLSKQAVAYRQISLLLKRPPGREAYPGDVFYLHSRLLERAARVSEEYVEKFTQGEVKGKTGSLTALPIIETQAGDVSAFVPTNVISITDGQIFLETDLFNAGIRPAVNAGISVSRVGGSAQTKIIKKLSGGIRISLAQYRELAAFAQFASDLDETTRKQLERGQRVTELMKQKQYTSMSVANQALSIYAVNEGYLDDIPVDKVLTFEEGLHAHFSNTQGALIDKINNSGDWDNNIEAAFKQHIEEFKTTGSW.

Glycine 171–threonine 178 contacts ATP.

It belongs to the ATPase alpha/beta chains family. F-type ATPases have 2 components, CF(1) - the catalytic core - and CF(0) - the membrane proton channel. CF(1) has five subunits: alpha(3), beta(3), gamma(1), delta(1), epsilon(1). CF(0) has three main subunits: a(1), b(2) and c(9-12). The alpha and beta chains form an alternating ring which encloses part of the gamma chain. CF(1) is attached to CF(0) by a central stalk formed by the gamma and epsilon chains, while a peripheral stalk is formed by the delta and b chains.

The protein localises to the cell inner membrane. It carries out the reaction ATP + H2O + 4 H(+)(in) = ADP + phosphate + 5 H(+)(out). Its function is as follows. Produces ATP from ADP in the presence of a proton gradient across the membrane. The alpha chain is a regulatory subunit. The chain is ATP synthase subunit alpha from Xylella fastidiosa (strain M12).